The sequence spans 601 residues: Urocanate hydratase (601 aa).

Residues 63–64 (GG) and Gln-141 contribute to the NAD(+) site. Positions 172 to 201 (SDRPSALLKQGLSPEGTAPGSGRSSAQVPG) are insert. A disordered region spans residues 179 to 200 (LKQGLSPEGTAPGSGRSSAQVP). Residues 216-218 (GMG), Glu-236, 282-283 (NA), 307-311 (QTSAH), 317-318 (YL), and Tyr-368 contribute to the NAD(+) site. Cys-456 is a catalytic residue. Residue Gly-538 coordinates NAD(+).

The protein belongs to the urocanase family. The cofactor is NAD(+).

The protein localises to the cytoplasm. The enzyme catalyses 4-imidazolone-5-propanoate = trans-urocanate + H2O. The protein operates within amino-acid degradation; L-histidine degradation into L-glutamate; N-formimidoyl-L-glutamate from L-histidine: step 2/3. Functionally, catalyzes the conversion of urocanate to 4-imidazolone-5-propionate. The sequence is that of Urocanate hydratase from Ralstonia nicotianae (strain ATCC BAA-1114 / GMI1000) (Ralstonia solanacearum).